Reading from the N-terminus, the 468-residue chain is ATP-dependent protease ATPase subunit HslU (468 aa).

ATP is bound by residues V22 and 64–69 (GVGKTE). The disordered stretch occupies residues 166-187 (FGNNDEEDEEPPTEDIKTKRSE). The span at 169-178 (NDEEDEEPPT) shows a compositional bias: acidic residues. D281, E346, and R418 together coordinate ATP.

This sequence belongs to the ClpX chaperone family. HslU subfamily. In terms of assembly, a double ring-shaped homohexamer of HslV is capped on each side by a ring-shaped HslU homohexamer. The assembly of the HslU/HslV complex is dependent on binding of ATP.

The protein resides in the cytoplasm. ATPase subunit of a proteasome-like degradation complex; this subunit has chaperone activity. The binding of ATP and its subsequent hydrolysis by HslU are essential for unfolding of protein substrates subsequently hydrolyzed by HslV. HslU recognizes the N-terminal part of its protein substrates and unfolds these before they are guided to HslV for hydrolysis. The polypeptide is ATP-dependent protease ATPase subunit HslU (Staphylococcus carnosus (strain TM300)).